A 407-amino-acid chain; its full sequence is Peptidase T (407 aa).

H81 serves as a coordination point for Zn(2+). The active site involves D83. D142 is a Zn(2+) binding site. The active-site Proton acceptor is the E176. Residues E177, D199, and H381 each coordinate Zn(2+).

The protein belongs to the peptidase M20B family. It depends on Zn(2+) as a cofactor.

The protein resides in the cytoplasm. The enzyme catalyses Release of the N-terminal residue from a tripeptide.. Functionally, cleaves the N-terminal amino acid of tripeptides. This is Peptidase T from Streptococcus sanguinis (strain SK36).